The primary structure comprises 292 residues: Ribosomal protein L11 methyltransferase (292 aa).

Residues threonine 144, glycine 165, aspartate 187, and asparagine 229 each contribute to the S-adenosyl-L-methionine site.

This sequence belongs to the methyltransferase superfamily. PrmA family.

The protein localises to the cytoplasm. The enzyme catalyses L-lysyl-[protein] + 3 S-adenosyl-L-methionine = N(6),N(6),N(6)-trimethyl-L-lysyl-[protein] + 3 S-adenosyl-L-homocysteine + 3 H(+). Functionally, methylates ribosomal protein L11. This Pseudomonas savastanoi pv. phaseolicola (strain 1448A / Race 6) (Pseudomonas syringae pv. phaseolicola (strain 1448A / Race 6)) protein is Ribosomal protein L11 methyltransferase.